The chain runs to 508 residues: Photosystem II CP47 reaction center protein (508 aa).

Helical transmembrane passes span 21–36, 101–115, 140–156, 203–218, 237–252, and 457–472; these read AVHL…WAGS, IVLS…VWHW, GIHL…FGAF, IAAG…FHLT, VLSS…AFVV, and SFAL…HGSR.

This sequence belongs to the PsbB/PsbC family. PsbB subfamily. In terms of assembly, PSII is composed of 1 copy each of membrane proteins PsbA, PsbB, PsbC, PsbD, PsbE, PsbF, PsbH, PsbI, PsbJ, PsbK, PsbL, PsbM, PsbT, PsbX, PsbY, PsbZ, Psb30/Ycf12, peripheral proteins PsbO, CyanoQ (PsbQ), PsbU, PsbV and a large number of cofactors. It forms dimeric complexes. The cofactor is Binds multiple chlorophylls. PSII binds additional chlorophylls, carotenoids and specific lipids..

It is found in the cellular thylakoid membrane. One of the components of the core complex of photosystem II (PSII). It binds chlorophyll and helps catalyze the primary light-induced photochemical processes of PSII. PSII is a light-driven water:plastoquinone oxidoreductase, using light energy to abstract electrons from H(2)O, generating O(2) and a proton gradient subsequently used for ATP formation. The protein is Photosystem II CP47 reaction center protein of Synechococcus elongatus (strain ATCC 33912 / PCC 7942 / FACHB-805) (Anacystis nidulans R2).